A 323-amino-acid chain; its full sequence is MGNRAGRSDFEWVYTDQPHTQRRKEMLAKYPAIKALMRPDPYLKWTVTAMVLAQLLACWLAQGLAWRWLFFWAYAFGGCVNHSLTLAIHDISHNTAFGTGRPSRNRWFAIFANLPVGLPYAASFKKYHVDHHRYLGGDGLDVDVPTYFEGRLFCTPARKLLWLALQPFFYTLRPLCVHPKAMTRMELCNTLVQLAADATIYALWGLKPMVYLLASSLLGLGLHPISGHFVAEHYMFLKGHETYSYYGPLNWITFNVGYHMEHHDFPSIPSCNLPLVRKIAPEYYDHLPQHHSWVKVLWDFVFDDSLGPFARVKRVCKLAENRL.

Residue G2 is the site of N-myristoyl glycine attachment. Transmembrane regions (helical) follow at residues 45 to 65 and 68 to 88; these read WTVT…QGLA and WLFF…TLAI. The short motif at 89 to 93 is the Histidine box-1 element; it reads HDISH. The interval 95 to 99 is required for C4-hydroxylase activity; sequence TAFGT. Residues 128-132 carry the Histidine box-2 motif; it reads HVDHH. Residues 209–231 form a helical membrane-spanning segment; it reads MVYLLASSLLGLGLHPISGHFVA. The Histidine box-3 signature appears at 259 to 263; it reads HMEHH.

It belongs to the fatty acid desaturase type 1 family. DEGS subfamily.

It localises to the endoplasmic reticulum membrane. It catalyses the reaction a dihydroceramide + 2 Fe(II)-[cytochrome b5] + O2 + 2 H(+) = a phytoceramide + 2 Fe(III)-[cytochrome b5] + H2O. The enzyme catalyses an N-acylsphinganine + 2 Fe(II)-[cytochrome b5] + O2 + 2 H(+) = an N-acylsphing-4-enine + 2 Fe(III)-[cytochrome b5] + 2 H2O. The catalysed reaction is N-octanoylsphinganine + 2 Fe(II)-[cytochrome b5] + O2 + 2 H(+) = N-octanoyl-4-hydroxysphinganine + 2 Fe(III)-[cytochrome b5] + H2O. It carries out the reaction an N-acylsphinganine + 2 Fe(II)-[cytochrome b5] + O2 + 2 H(+) = an N-acyl-(4R)-4-hydroxysphinganine + 2 Fe(III)-[cytochrome b5] + H2O. It participates in membrane lipid metabolism; sphingolipid biosynthesis. Its function is as follows. Bifunctional enzyme which acts both as a sphingolipid delta(4)-desaturase and a sphingolipid C4-monooxygenase. The chain is Sphingolipid delta(4)-desaturase/C4-monooxygenase DES2 from Bos taurus (Bovine).